The following is a 497-amino-acid chain: Protein FAM114A2 (497 aa).

Residues 1 to 54 (MSDKDPPESPVVTGVASTLKDENCEPVEKPEDKSQPVVSTRKRPETKPSSDLEA) form a disordered region. Residues 19 to 34 (LKDENCEPVEKPEDKS) show a composition bias toward basic and acidic residues. Phosphoserine is present on residues serine 84 and serine 205. Positions 344 to 364 (VAEKEEGEKESEAGNTEEAQK) are disordered.

It belongs to the FAM114 family.

This is Protein FAM114A2 (Fam114a2) from Mus musculus (Mouse).